Here is a 175-residue protein sequence, read N- to C-terminus: Large ribosomal subunit protein uL10 (175 aa).

It belongs to the universal ribosomal protein uL10 family. As to quaternary structure, part of the ribosomal stalk of the 50S ribosomal subunit. The N-terminus interacts with L11 and the large rRNA to form the base of the stalk. The C-terminus forms an elongated spine to which L12 dimers bind in a sequential fashion forming a multimeric L10(L12)X complex.

Functionally, forms part of the ribosomal stalk, playing a central role in the interaction of the ribosome with GTP-bound translation factors. The polypeptide is Large ribosomal subunit protein uL10 (Synechococcus sp. (strain CC9605)).